The sequence spans 1107 residues: MDTTFGNGECEMFTSPHQKFCATQTSPSNMKEPDEPGVALKNGQGVHFDYHMHPEARKDSESTVVAGESHSEMPISSNGHNGTIAVPEGYGANSNGTSNKKKKKKSKKRHIDATINDPDAEYPTSRVIKQAPNGDVIVESLEDEHHDHHSNLSATIWDNSTIEEQEDLKRFWESLEEPEKVKLVKIDKKSILDLFRTFSSNQQGGQPTHHSPASSSTSLAGTPHHGCTCSSCGRRSSIIEAELEMIYDNHFDDIIDFIHEVRDIKDLNALPGLLFGGFHMLEEEHRMKKTRARRRSTDLQPQTRISPITSSTDGPPEPTTTSNVSTPSHSESVSSPSPWTNAVAGLLEKFLQENPGASWNKCSQLFQEIQEAGNQVNPGNGSSEGSDRENDDKKTAFLKDFGEMISGGFNDMTSGKQEQFHENFANGIHKIANDFLNNDGKSFVEMVEALSGSRSERADLLKSLQEIEDHSNQQEQPGTVREQIEELHDEEPVIPEDIQNQPKEVVGQYVDQRINQLSELRDRLEEEYDYDTYDDPEYDNQEYDEELSDTESEISEEEKMQEIRRLFLIQVIKLFQERLKNAYKEKLSQDRTRRLIEELEAEENAKKEKELKKLKQKEKAKEKKRLQQVAKDEERRRKEEEERAREEELRLKQEELRAEQKRRKEEARQKKEEEKRKRIEELRLKKEAEKKKQEEKERKERELKEKKERESKEKEEREMMEKKEQLKKEQQPKVEQTQEKPQAPPSQTSQSNPSVSDPISSRQDNSVSSLDPTHDLQNAISSGLEQLSLGQQPMSHISSQPSQSISQLPIQPPSQPFLDMDQIRSPVTAPAMPTQAQMPQSARGSLWGQPVNNFSPFSEGVWGSRNNSIWGNSSMSGGSIGSGTMGSGTIGSGTIGGSASIWGSQTPTLANTTMGMGLQSGINGIQGLSLEKENGSASIAGTPGNSLPGNSLPPISRNSLSGNSIPGSIPSSIPGNLSGSLPGNLSGSIPGSLPGNLAANSLPGMSPSMSVPLPQPFPANVDNEMIRTAAYQAFMLLQNSNQLEYGLAAAVKLYQTTILVLSMEVSFSQFLGSCRDDIESSYRFDYVYDDYGAVSHIKASLRSSLWN.

Disordered stretches follow at residues 21–42 (CATQ…ALKN), 57–120 (RKDS…DPDA), 201–226 (NQQG…PHHG), 286–338 (RMKK…SPSP), 525–556 (EEEY…EISE), 605–775 (AKKE…PTHD), 791–820 (QQPM…FLDM), and 935–967 (GSAS…SIPG). Over residues 99-110 (NKKKKKKSKKRH) the composition is skewed to basic residues. Residues 207–226 (PTHHSPASSSTSLAGTPHHG) are compositionally biased toward low complexity. A compositionally biased stretch (polar residues) spans 298–313 (DLQPQTRISPITSSTD). Positions 321–338 (TSNVSTPSHSESVSSPSP) are enriched in low complexity. Residues 508–733 (QYVDQRINQL…EQLKKEQQPK (226 aa)) adopt a coiled-coil conformation. Composition is skewed to basic and acidic residues over residues 605-621 (AKKE…EKAK) and 630-738 (AKDE…EQTQ). The span at 745-775 (PSQTSQSNPSVSDPISSRQDNSVSSLDPTHD) shows a compositional bias: polar residues. A compositionally biased stretch (low complexity) spans 791-809 (QQPMSHISSQPSQSISQLP). A compositionally biased stretch (polar residues) spans 935-949 (GSASIAGTPGNSLPG). Over residues 958–967 (NSLSGNSIPG) the composition is skewed to low complexity.

This sequence belongs to the NST1 family.

The protein localises to the cytoplasm. In terms of biological role, may act as a negative regulator of salt tolerance. The protein is Stress response protein NST1 (NST1) of Meyerozyma guilliermondii (strain ATCC 6260 / CBS 566 / DSM 6381 / JCM 1539 / NBRC 10279 / NRRL Y-324) (Yeast).